Reading from the N-terminus, the 61-residue chain is Large ribosomal subunit protein uL29 (61 aa).

The protein belongs to the universal ribosomal protein uL29 family.

The chain is Large ribosomal subunit protein uL29 from Stenotrophomonas maltophilia (strain R551-3).